The sequence spans 54 residues: MSTATFVEIILAIILPPLGVFLKFGCKVEFWICLILTLFGYLPGILYALYIITK.

2 consecutive transmembrane segments (helical) span residues 2–22 (STAT…GVFL) and 32–52 (ICLI…LYII).

This sequence belongs to the UPF0057 (PMP3) family.

Its subcellular location is the membrane. The protein is Hydrophobic protein RCI2B (RCI2B) of Arabidopsis thaliana (Mouse-ear cress).